The primary structure comprises 308 residues: Homoserine O-succinyltransferase (308 aa).

Cys-142 acts as the Acyl-thioester intermediate in catalysis. Residues Lys-163 and Ser-192 each contribute to the substrate site. Catalysis depends on His-235, which acts as the Proton acceptor. Glu-237 is an active-site residue. Arg-249 provides a ligand contact to substrate.

It belongs to the MetA family.

It localises to the cytoplasm. The catalysed reaction is L-homoserine + succinyl-CoA = O-succinyl-L-homoserine + CoA. Its pathway is amino-acid biosynthesis; L-methionine biosynthesis via de novo pathway; O-succinyl-L-homoserine from L-homoserine: step 1/1. Functionally, transfers a succinyl group from succinyl-CoA to L-homoserine, forming succinyl-L-homoserine. This Pseudoalteromonas atlantica (strain T6c / ATCC BAA-1087) protein is Homoserine O-succinyltransferase.